A 418-amino-acid polypeptide reads, in one-letter code: Serine hydroxymethyltransferase 2 (418 aa).

(6S)-5,6,7,8-tetrahydrofolate is bound by residues leucine 121 and glycine 125–leucine 127. An N6-(pyridoxal phosphate)lysine modification is found at lysine 230. Residue serine 355–phenylalanine 357 participates in (6S)-5,6,7,8-tetrahydrofolate binding.

The protein belongs to the SHMT family. In terms of assembly, homodimer. The cofactor is pyridoxal 5'-phosphate.

The protein resides in the cytoplasm. It carries out the reaction (6R)-5,10-methylene-5,6,7,8-tetrahydrofolate + glycine + H2O = (6S)-5,6,7,8-tetrahydrofolate + L-serine. It functions in the pathway one-carbon metabolism; tetrahydrofolate interconversion. The protein operates within amino-acid biosynthesis; glycine biosynthesis; glycine from L-serine: step 1/1. In terms of biological role, catalyzes the reversible interconversion of serine and glycine with tetrahydrofolate (THF) serving as the one-carbon carrier. This reaction serves as the major source of one-carbon groups required for the biosynthesis of purines, thymidylate, methionine, and other important biomolecules. Also exhibits THF-independent aldolase activity toward beta-hydroxyamino acids, producing glycine and aldehydes, via a retro-aldol mechanism. This chain is Serine hydroxymethyltransferase 2, found in Pseudomonas aeruginosa (strain ATCC 15692 / DSM 22644 / CIP 104116 / JCM 14847 / LMG 12228 / 1C / PRS 101 / PAO1).